The chain runs to 345 residues: Dimethyladenosine transferase 1, mitochondrial (345 aa).

A mitochondrion-targeting transit peptide spans 1-27 (MAAPGKLSTCRLPPLPTIREIIKLFRL). 7 residues coordinate S-adenosyl-L-methionine: leucine 38, glycine 63, glutamate 85, lysine 86, aspartate 111, valine 112, and asparagine 141.

It belongs to the class I-like SAM-binding methyltransferase superfamily. rRNA adenine N(6)-methyltransferase family. KsgA subfamily. As to quaternary structure, interacts with mitochondrial RNA polymerase POLRMT. Interacts with TFAM. Bound to the maturing mtSSU until the late stages of assembly.

Its subcellular location is the mitochondrion. The catalysed reaction is adenosine(N)/adenosine(N+1) in rRNA + 4 S-adenosyl-L-methionine = N(6)-dimethyladenosine(N)/N(6)-dimethyladenosine(N+1) in rRNA + 4 S-adenosyl-L-homocysteine + 4 H(+). Its function is as follows. Mitochondrial methyltransferase which uses S-adenosyl methionine to dimethylate two highly conserved adjacent adenosine residues (A1583 and A1584) within the loop of helix 45 at the 3-prime end of 12S rRNA, thereby regulating the assembly or stability of the small subunit of the mitochondrial ribosome. Also required for basal transcription of mitochondrial DNA, probably via its interaction with POLRMT and TFAM. Stimulates transcription independently of the methyltransferase activity. In Macaca fascicularis (Crab-eating macaque), this protein is Dimethyladenosine transferase 1, mitochondrial (TFB1M).